A 278-amino-acid polypeptide reads, in one-letter code: 2-dehydro-3-deoxyphosphooctonate aldolase (278 aa).

Belongs to the KdsA family.

It localises to the cytoplasm. It carries out the reaction D-arabinose 5-phosphate + phosphoenolpyruvate + H2O = 3-deoxy-alpha-D-manno-2-octulosonate-8-phosphate + phosphate. The protein operates within carbohydrate biosynthesis; 3-deoxy-D-manno-octulosonate biosynthesis; 3-deoxy-D-manno-octulosonate from D-ribulose 5-phosphate: step 2/3. Its pathway is bacterial outer membrane biogenesis; lipopolysaccharide biosynthesis. This chain is 2-dehydro-3-deoxyphosphooctonate aldolase, found in Fusobacterium nucleatum subsp. nucleatum (strain ATCC 25586 / DSM 15643 / BCRC 10681 / CIP 101130 / JCM 8532 / KCTC 2640 / LMG 13131 / VPI 4355).